Consider the following 207-residue polypeptide: Large ribosomal subunit protein uL4 (207 aa).

Positions 49-78 are disordered; it reads HAVKNRSAVSGGGRKPWRQKGTGRARQGSI.

The protein belongs to the universal ribosomal protein uL4 family. In terms of assembly, part of the 50S ribosomal subunit.

One of the primary rRNA binding proteins, this protein initially binds near the 5'-end of the 23S rRNA. It is important during the early stages of 50S assembly. It makes multiple contacts with different domains of the 23S rRNA in the assembled 50S subunit and ribosome. Functionally, forms part of the polypeptide exit tunnel. This is Large ribosomal subunit protein uL4 from Streptococcus suis (strain 98HAH33).